Consider the following 759-residue polypeptide: Multifunctional tryptophan biosynthesis protein (759 aa).

In terms of domain architecture, Glutamine amidotransferase type-1 spans 27-223 (PIVMIDNYDS…LNLTAGTWEE (197 aa)). 80–82 (GPG) is a binding site for L-glutamine. Cys-108 functions as the Nucleophile; for GATase activity in the catalytic mechanism. L-glutamine is bound by residues Gln-112 and 158–159 (SL). Active-site for GATase activity residues include His-197 and Glu-199. Residues 257–519 (ILEKIHAQRL…DPAAFARELL (263 aa)) are indole-3-glycerol phosphate synthase. The segment at 536–759 (LVKVCGTRSL…KAFINAVKEL (224 aa)) is N-(5'-phosphoribosyl)anthranilate isomerase.

The enzyme catalyses N-(5-phospho-beta-D-ribosyl)anthranilate = 1-(2-carboxyphenylamino)-1-deoxy-D-ribulose 5-phosphate. The catalysed reaction is 1-(2-carboxyphenylamino)-1-deoxy-D-ribulose 5-phosphate + H(+) = (1S,2R)-1-C-(indol-3-yl)glycerol 3-phosphate + CO2 + H2O. It carries out the reaction chorismate + L-glutamine = anthranilate + pyruvate + L-glutamate + H(+). The protein operates within amino-acid biosynthesis; L-tryptophan biosynthesis; L-tryptophan from chorismate: step 1/5. Its pathway is amino-acid biosynthesis; L-tryptophan biosynthesis; L-tryptophan from chorismate: step 3/5. It functions in the pathway amino-acid biosynthesis; L-tryptophan biosynthesis; L-tryptophan from chorismate: step 4/5. Trifunctional enzyme bearing the Gln amidotransferase (GATase) domain of anthranilate synthase, indole-glycerolphosphate synthase, and phosphoribosylanthranilate isomerase activities. The sequence is that of Multifunctional tryptophan biosynthesis protein (trp1) from Schizosaccharomyces pombe (strain 972 / ATCC 24843) (Fission yeast).